The primary structure comprises 378 residues: Tetraacyldisaccharide 4'-kinase (378 aa).

63–70 contacts ATP; the sequence is AVGGAGKT.

It belongs to the LpxK family.

The enzyme catalyses a lipid A disaccharide + ATP = a lipid IVA + ADP + H(+). The protein operates within glycolipid biosynthesis; lipid IV(A) biosynthesis; lipid IV(A) from (3R)-3-hydroxytetradecanoyl-[acyl-carrier-protein] and UDP-N-acetyl-alpha-D-glucosamine: step 6/6. Functionally, transfers the gamma-phosphate of ATP to the 4'-position of a tetraacyldisaccharide 1-phosphate intermediate (termed DS-1-P) to form tetraacyldisaccharide 1,4'-bis-phosphate (lipid IVA). The polypeptide is Tetraacyldisaccharide 4'-kinase (Anaeromyxobacter sp. (strain K)).